We begin with the raw amino-acid sequence, 90 residues long: MSADGPVVNVHVLFFAKSRELAQTPRSKVDVPSQIVASDLLDQLVTRFDLASIKDNLILAHNESYIENLSDKILFREGDELAVIPPLSGG.

Gly90 is modified (1-thioglycine; alternate). Gly90 is modified (glycyl adenylate; alternate).

Belongs to the MoaD family. MOCS2A subfamily. As to quaternary structure, heterotetramer; composed of 2 small (Mocs2A) and 2 large (Mocs2B) subunits. In terms of processing, C-terminal thiocarboxylation occurs in 2 steps, it is first acyl-adenylated (-COAMP) via the hesA/moeB/thiF part of MOCS3, then thiocarboxylated (-COSH) via the rhodanese domain of MOCS3.

The protein localises to the cytoplasm. It participates in cofactor biosynthesis; molybdopterin biosynthesis. Functionally, acts as a sulfur carrier required for molybdopterin biosynthesis. Component of the molybdopterin synthase complex that catalyzes the conversion of precursor Z into molybdopterin by mediating the incorporation of 2 sulfur atoms into precursor Z to generate a dithiolene group. In the complex, serves as sulfur donor by being thiocarboxylated (-COSH) at its C-terminus by MOCS3. After interaction with Mocs2B, the sulfur is then transferred to precursor Z to form molybdopterin. This Drosophila ananassae (Fruit fly) protein is Molybdopterin synthase sulfur carrier subunit.